The sequence spans 291 residues: tRNA (guanine-N(1)-)-methyltransferase (291 aa).

Residues Gly-160 and 184–189 (IGDYVL) each bind S-adenosyl-L-methionine.

The protein belongs to the RNA methyltransferase TrmD family. As to quaternary structure, homodimer.

The protein resides in the cytoplasm. The catalysed reaction is guanosine(37) in tRNA + S-adenosyl-L-methionine = N(1)-methylguanosine(37) in tRNA + S-adenosyl-L-homocysteine + H(+). Functionally, specifically methylates guanosine-37 in various tRNAs. This Corynebacterium efficiens (strain DSM 44549 / YS-314 / AJ 12310 / JCM 11189 / NBRC 100395) protein is tRNA (guanine-N(1)-)-methyltransferase.